The sequence spans 467 residues: Chromosomal replication initiator protein DnaA (467 aa).

A domain I, interacts with DnaA modulators region spans residues 1-90; that stretch reads MSLSLWQQCL…KSVTQTPQAA (90 aa). Residues 91-130 are domain II; it reads VTSNVAAPAQVAQTQPQRAAPSTRSGWDNVPAPAEPTYRS. Residues 97 to 111 are compositionally biased toward low complexity; that stretch reads APAQVAQTQPQRAAP. Residues 97 to 119 are disordered; the sequence is APAQVAQTQPQRAAPSTRSGWDN. The interval 131-347 is domain III, AAA+ region; that stretch reads NVNVKHTFDN…GALNRVIANA (217 aa). ATP is bound by residues G175, G177, K178, and T179. A domain IV, binds dsDNA region spans residues 348–467; sequence NFTGRAITID…FSNLIRTLSS (120 aa).

It belongs to the DnaA family. Oligomerizes as a right-handed, spiral filament on DNA at oriC.

It is found in the cytoplasm. In terms of biological role, plays an essential role in the initiation and regulation of chromosomal replication. ATP-DnaA binds to the origin of replication (oriC) to initiate formation of the DNA replication initiation complex once per cell cycle. Binds the DnaA box (a 9 base pair repeat at the origin) and separates the double-stranded (ds)DNA. Forms a right-handed helical filament on oriC DNA; dsDNA binds to the exterior of the filament while single-stranded (ss)DNA is stabiized in the filament's interior. The ATP-DnaA-oriC complex binds and stabilizes one strand of the AT-rich DNA unwinding element (DUE), permitting loading of DNA polymerase. After initiation quickly degrades to an ADP-DnaA complex that is not apt for DNA replication. Binds acidic phospholipids. This is Chromosomal replication initiator protein DnaA from Escherichia coli O157:H7.